The following is a 374-amino-acid chain: MSNTKDNFNVADLTAALGAGDREDLVNALKNKLQDITGKPTNVLECLSPNVRKRVEVLKEIQSQHDELEAKFYEERAVLEAKYQKLYQPLYTKRFDIVNGVVEVNTSETEAAAMDQDEDEDAVGKGVPDFWLIAMKNNDVLSEEITERDEGALKFLKDIKWAKIDNPKGFKLEFFFDTNPYFTNTVLTKTYHMIDEDEPILEKALGTEIEWYPGKCLTQKILKKKPKKGSKNAKPITKTEQCESFFNFFSPPQVPEDEEDIDEDAAEELQSLMEQDYDIGSTIRDKIISHAVSWFTGEAAEDDFADLEDDDDDDEEDDDDEDEEEEDDEDDEDEEDEDDTNTKKKSSAVRKRGVRAHAPAGGQAGERPPECKQQ.

A coiled-coil region spans residues Val26–Glu80. Positions Leu47–Gln62 match the Nuclear export signal motif. A Nuclear localization signal motif is present at residues Lys223–Lys228. The segment covering Ala299–Asp339 has biased composition (acidic residues). Residues Ala299–Gln374 form a disordered region. The segment covering Lys343–Arg355 has biased composition (basic residues). A Cysteine methyl ester modification is found at Cys371. The S-farnesyl cysteine moiety is linked to residue Cys371. Positions Lys372 to Gln374 are cleaved as a propeptide — removed in mature form.

This sequence belongs to the nucleosome assembly protein (NAP) family. In terms of assembly, binds preferentially histones H4 and H1 in vitro. Interacts with CYCB1;1.

It is found in the nucleus. The protein localises to the cytoplasm. Functionally, may modulate chromatin structure by regulation of nucleosome assembly/disassembly. Could function together with B-type cyclins in the regulation of microtubule dynamics. In Nicotiana tabacum (Common tobacco), this protein is Nucleosome assembly protein 1;1 (NAP1;1).